Reading from the N-terminus, the 231-residue chain is Aquaporin Z (231 aa).

2 consecutive transmembrane segments (helical) span residues 9 to 29 (CFGTFWLVFGGCGSAVLAAGF) and 34 to 54 (IGFAGVALAFGLTVLTMAFAV). An NPA 1 motif is present at residues 63–65 (NPA). The next 3 helical transmembrane spans lie at 82–102 (VGYVIAQVVGGIVAAALLYLI), 129–149 (YSMLSALVVELVLSAGFLLVI), and 156–176 (FAPAGFAPIAIGLALTLIHLI). The NPA 2 motif lies at 186–188 (NPA). The helical transmembrane segment at 202–222 (LEQLWFFWVVPIVGGIIGGLI) threads the bilayer.

This sequence belongs to the MIP/aquaporin (TC 1.A.8) family. Homotetramer.

The protein resides in the cell inner membrane. It catalyses the reaction H2O(in) = H2O(out). In terms of biological role, channel that permits osmotically driven movement of water in both directions. It is involved in the osmoregulation and in the maintenance of cell turgor during volume expansion in rapidly growing cells. It mediates rapid entry or exit of water in response to abrupt changes in osmolarity. This chain is Aquaporin Z, found in Escherichia coli O157:H7.